Reading from the N-terminus, the 424-residue chain is Serpin-Z2A (424 aa).

Positions 370-394 (GTEAAASTACTIRLLSMSYPEDFVA) are RCL.

The protein belongs to the serpin family.

In terms of biological role, probable serine protease inhibitor. The chain is Serpin-Z2A from Oryza sativa subsp. japonica (Rice).